The primary structure comprises 98 residues: NADH-ubiquinone oxidoreductase chain 4L (98 aa).

3 consecutive transmembrane segments (helical) span residues 1–21, 29–49, and 58–78; these read MPII…GMLT, SLLC…LMAL, and IVPI…LSLL.

The protein belongs to the complex I subunit 4L family. In terms of assembly, core subunit of respiratory chain NADH dehydrogenase (Complex I) which is composed of 45 different subunits.

Its subcellular location is the mitochondrion inner membrane. It carries out the reaction a ubiquinone + NADH + 5 H(+)(in) = a ubiquinol + NAD(+) + 4 H(+)(out). In terms of biological role, core subunit of the mitochondrial membrane respiratory chain NADH dehydrogenase (Complex I) which catalyzes electron transfer from NADH through the respiratory chain, using ubiquinone as an electron acceptor. Part of the enzyme membrane arm which is embedded in the lipid bilayer and involved in proton translocation. In Presbytis melalophos (Mitred leaf monkey), this protein is NADH-ubiquinone oxidoreductase chain 4L (MT-ND4L).